Consider the following 4065-residue polypeptide: Polyketide synthase-nonribosomal peptide synthetase pyiS (4065 aa).

In terms of domain architecture, Ketosynthase family 3 (KS3) spans 6 to 440 (SEPVAIIGTG…GANCHAILEA (435 aa)). Catalysis depends on for beta-ketoacyl synthase activity residues Cys179, His314, and His360. The acyl transferase stretch occupies residues 552 to 875 (IFTGQGAQWP…PYTGVLSRGK (324 aa)). The N-terminal hotdog fold stretch occupies residues 950–1087 (NELLGRQILD…CDVLVTYGDS (138 aa)). The PKS/mFAS DH domain maps to 950 to 1260 (NELLGRQILD…TQPLFNPTEA (311 aa)). The tract at residues 951–1254 (ELLGRQILDG…QVEGLQTQPL (304 aa)) is dehydratase (DH) domain. The active-site Proton acceptor; for dehydratase activity is the His982. The C-terminal hotdog fold stretch occupies residues 1102 to 1260 (EYFMLGVESD…TQPLFNPTEA (159 aa)). Asp1166 acts as the Proton donor; for dehydratase activity in catalysis. Residues 1409 to 1593 (AHGMPRYTKY…KQTGFSGIDT (185 aa)) are methyltransferase (MT) domain. The ketoreductase (KR)domain stretch occupies residues 2129 to 2302 (TYWLVGLSGT…NASVVHIGAI (174 aa)). A Carrier 1 domain is found at 2411 to 2492 (INSAEVYEII…EILETAQQLL (82 aa)). Position 2452 is an O-(pantetheine 4'-phosphoryl)serine (Ser2452). Positions 2497–2561 (LPKMDPNDKS…GAKKGETVSK (65 aa)) are disordered. The segment covering 2551–2561 (SGAKKGETVSK) has biased composition (basic and acidic residues). A condensation region spans residues 2645 to 3076 (SKKTPISFAQ…FSRNQALRLA (432 aa)). An adenylation region spans residues 3112–3516 (DIAKQKSHSL…RLLLEGRIAD (405 aa)). The 81-residue stretch at 3634 to 3714 (QDLNDTESRL…DMAALVDELS (81 aa)) folds into the Carrier 2 domain. Position 3674 is an O-(pantetheine 4'-phosphoryl)serine (Ser3674). Positions 3760 to 3975 (LTGSTGFLGR…LDFISVDEAA (216 aa)) are reductase-like.

This sequence belongs to the NRP synthetase family.

It participates in mycotoxin biosynthesis. Functionally, hybrid PKS-NRPS synthetase; part of the gene cluster that mediates the biosynthesis of the mycotoxin pyrichalasin H, a tyrosine-derived cytochalasan that inhibits the growth of rice seedlings, but also inhibits lymphocyte capping and actin polymerization and alters cell morphology. Pyrichalasin H is indicated as the responsible agent for the genus-specific pathogenicity of M.grisea toward crabgrass. The first step in the pathway is catalyzed by the O-methyltransferase pyiA which methylates free tyrosine to generate the precursor O-methyltyrosine. The hybrid PKS-NRPS pyiS, assisted by the enoyl reductase pyiC, are responsible for fusion of the O-methyltyrosine precursor and the polyketide backbone. The polyketide synthase module (PKS) of pyiS is responsible for the synthesis of the polyketide backbone and the downstream nonribosomal peptide synthetase (NRPS) amidates the carboxyl end of the polyketide with the O-methyltyrosine precursor. As the NRPS A-domain demonstrates substrate tolerance, pyiS can also use phenylalanine, tyrosine and even para-chlorophenylalanine as amino acid precursor, which leads to the production of novel cytochalasans, including halogenated cytochalasans. Because pyiS lacks a designated enoylreductase (ER) domain, the required activity is provided the enoyl reductase pyiC. Reduction by the hydrolyase pyiE leads to 1,5-dihydropyrrolone, which is substrate for dehydration and intra-molecular Diels-Alder cyclization by the Diels-Alderase pyiF to yield the required isoindolone-fused macrocycle. The tailoring cytochrome P450 monooxygenases piyD and piyG catalyze the hydroxylation at C-18 and C-7, respectivily, whereas the short-chain dehydrogenase/reductase pyiH reduces the carbonyl at C-21 in preparation for the transfer of an acetyl group by the acetyltransferase pyiB. These 3 reactions whose order is not clear yet, lead to the production of O-methylpyrichalasin J, a deacetylated pyrichalasin H. Finally, pyiB to converts O-methylpyrichalasin J into the final product pyrichalasin H via acetylation of C-21. The sequence is that of Polyketide synthase-nonribosomal peptide synthetase pyiS from Pyricularia grisea (Crabgrass-specific blast fungus).